A 381-amino-acid chain; its full sequence is Homoserine O-succinyltransferase (381 aa).

Positions 45 to 360 (NAVLVCHALN…PHGHDAFLLD (316 aa)) constitute an AB hydrolase-1 domain. The active-site Nucleophile is the S151. Residue R221 coordinates substrate. Residues D321 and H354 contribute to the active site. Position 355 (D355) interacts with substrate.

It belongs to the AB hydrolase superfamily. MetX family. Homodimer.

It is found in the cytoplasm. The enzyme catalyses L-homoserine + succinyl-CoA = O-succinyl-L-homoserine + CoA. It functions in the pathway amino-acid biosynthesis; L-methionine biosynthesis via de novo pathway; O-succinyl-L-homoserine from L-homoserine: step 1/1. Its function is as follows. Transfers a succinyl group from succinyl-CoA to L-homoserine, forming succinyl-L-homoserine. The sequence is that of Homoserine O-succinyltransferase from Burkholderia thailandensis (strain ATCC 700388 / DSM 13276 / CCUG 48851 / CIP 106301 / E264).